Reading from the N-terminus, the 1031-residue chain is MTDRVRLYEIAREMGCDNREVLEVCEQLGIPFKSHSSTISPEQAELVRSKLSEPRVVKPTRPRLRPKLQPESSQPQPPVEAKASERPQHIVGIRRPAPAQQQAAAGEASSSKPSPQRPDQLSSEKGAAGGSLELIGPPRRQVDPPARPAAQEPQPAAASTRPEAAAKAGSPEPSPAPAAKRPTVLPPPRRAASGPEPPQRAPESRRPGLAEAPSPSGARTSPPVEEKVSLPQAEQRPRPQLVGAPVRPGTRPEPRSPVAKKEESSDSGKADEAPRPQRRLELVGPPTRPVAKPLPPEPDASPRLPEGIPEERPTPVLAEAPVRPAAPKLKRKTVEEEDEELQALERRAGRTQAKRKRSRRREEGDGDVLDLDPLTVLSSVKQAELNALKPLARPTAKPPSYRPPAAAARPRPAAERPQRPSASAEATAPEAAAESLPEEKVLLLEGSLTVQELARRLRVAETEIIKTLFFKGVRVTINQVLDESLAESVAKELGYEVRRPEAEPKAKKTEILDLEDIDHLVPRPPVVTIMGHVDHGKTTLLDAIRHTNVAQREAGGITQRIGAYHVDVDFEGQKRRIVFLDTPGHQAFTAMRARGARVTDIAVLVVAADDGVQPQTLEALSHARAAQVPIIVAINKIDKPGSQPERVKQQLAEHGLLPEEWGGDTPMVEVSALTRRNLDALLEMILLVADVAELQANPNRPARGTVIEAHLDKARGPVATLLVQNGTLRVGDTLVAGAVLGRVKAMMDDRGQRLQEAGPSSAVQLLGLEEVPAAGDEFQVYADEKEARRIAEERAEALRQARLQQALLSRRVSLGSISAKAQEGQLKELNLIIKTDVQGSAEAIQTALQDLPQEEVRLRVLLAAPGEITETDVDLAAASDAIILGFNTSFAPGARQAADDKGVDVREYDIIYNLLDDLRAAMEGLLEPEEVEEPLGQAEVRKVIPISRGAVAGSYVLSGKVQRNALVRVRRKGEVVYQGRLDSLKRFKDDVREVAAGFECGIGIEKFDAWQEGDLIEVYQMVTKRRTLAPA.

2 disordered regions span residues 33 to 369 and 388 to 436; these read KSHS…GDVL and LKPL…AESL. Over residues 45 to 56 the composition is skewed to basic and acidic residues; that stretch reads ELVRSKLSEPRV. Low complexity predominate over residues 96 to 105; it reads PAPAQQQAAA. A compositionally biased stretch (polar residues) spans 108–123; the sequence is ASSSKPSPQRPDQLSS. Low complexity predominate over residues 148-171; the sequence is PAAQEPQPAAASTRPEAAAKAGSP. The segment covering 184 to 200 has biased composition (pro residues); it reads VLPPPRRAASGPEPPQR. The segment covering 250–281 has biased composition (basic and acidic residues); the sequence is TRPEPRSPVAKKEESSDSGKADEAPRPQRRLE. A compositionally biased stretch (pro residues) spans 286-299; it reads PTRPVAKPLPPEPD. Positions 419–435 are enriched in low complexity; that stretch reads RPSASAEATAPEAAAES. The 174-residue stretch at 522–695 folds into the tr-type G domain; it reads PRPPVVTIMG…LLVADVAELQ (174 aa). The interval 531–538 is G1; that stretch reads GHVDHGKT. Residue 531–538 coordinates GTP; sequence GHVDHGKT. Positions 556–560 are G2; that stretch reads GITQR. A G3 region spans residues 581–584; that stretch reads DTPG. Residues 581 to 585 and 635 to 638 contribute to the GTP site; these read DTPGH and NKID. Residues 635-638 form a G4 region; it reads NKID. The tract at residues 671 to 673 is G5; it reads SAL.

The protein belongs to the TRAFAC class translation factor GTPase superfamily. Classic translation factor GTPase family. IF-2 subfamily.

The protein localises to the cytoplasm. One of the essential components for the initiation of protein synthesis. Protects formylmethionyl-tRNA from spontaneous hydrolysis and promotes its binding to the 30S ribosomal subunits. Also involved in the hydrolysis of GTP during the formation of the 70S ribosomal complex. The polypeptide is Translation initiation factor IF-2 (Synechococcus sp. (strain JA-3-3Ab) (Cyanobacteria bacterium Yellowstone A-Prime)).